A 280-amino-acid polypeptide reads, in one-letter code: MTVVTPVAVAQPNGSDILVGSGQPLLLIGGPCSLESEQLGREVAETVSKICKKLGISYVFKASFDKANRTSISSYRGPGLKKGLASLARIREDLQVPVISDIHDISQVGPAAEVLDIIQIPAFLCRQTDLLVAAAKSGKPVNVKKGQFVSPWDMENAIGKLRDAGSDKVMLVERGACFGYNNLVVDMRSLPVMRSFNCPVIYDATHSVQLPGGAGGSSSGQREFIEPLSKAAIAAGIDGLFMEIHPDPDKALCDGPNSIALDQVEELLTKLVKVRAAVEE.

It belongs to the KdsA family.

It is found in the cytoplasm. It catalyses the reaction D-arabinose 5-phosphate + phosphoenolpyruvate + H2O = 3-deoxy-alpha-D-manno-2-octulosonate-8-phosphate + phosphate. It functions in the pathway carbohydrate biosynthesis; 3-deoxy-D-manno-octulosonate biosynthesis; 3-deoxy-D-manno-octulosonate from D-ribulose 5-phosphate: step 2/3. The protein operates within bacterial outer membrane biogenesis; lipopolysaccharide biosynthesis. The protein is 2-dehydro-3-deoxyphosphooctonate aldolase of Desulfotalea psychrophila (strain LSv54 / DSM 12343).